A 143-amino-acid polypeptide reads, in one-letter code: Large ribosomal subunit protein uL15 (143 aa).

Belongs to the universal ribosomal protein uL15 family. As to quaternary structure, part of the 50S ribosomal subunit.

Its function is as follows. Binds to the 23S rRNA. The protein is Large ribosomal subunit protein uL15 of Methanococcus aeolicus (strain ATCC BAA-1280 / DSM 17508 / OCM 812 / Nankai-3).